Here is a 1005-residue protein sequence, read N- to C-terminus: Mediator of RNA polymerase II transcription subunit 24 (1005 aa).

The protein belongs to the Mediator complex subunit 24 family. Component of the Mediator complex.

Its subcellular location is the nucleus. In terms of biological role, component of the Mediator complex, a coactivator involved in the regulated transcription of nearly all RNA polymerase II-dependent genes. Mediator functions as a bridge to convey information from gene-specific regulatory proteins to the basal RNA polymerase II transcription machinery. Mediator is recruited to promoters by direct interactions with regulatory proteins and serves as a scaffold for the assembly of a functional preinitiation complex with RNA polymerase II and the general transcription factors. The polypeptide is Mediator of RNA polymerase II transcription subunit 24 (MED24) (Aedes aegypti (Yellowfever mosquito)).